The primary structure comprises 296 residues: Copper resistance protein B (296 aa).

Residues 1–23 (MKRNLKAIPVLVAGLFTSQLSIA) form the signal peptide.

It localises to the cell outer membrane. Its function is as follows. Required for the copper-inducible expression of copper resistance. The protein is Copper resistance protein B (pcoB) of Escherichia coli.